We begin with the raw amino-acid sequence, 308 residues long: GTPase Era (308 aa).

One can recognise an Era-type G domain in the interval Arg7 to Glu181. Residues Gly15–Ser22 are G1. Gly15 to Ser22 serves as a coordination point for GTP. Residues Gln41–Asn45 form a G2 region. The tract at residues Asp62–Gly65 is G3. Residues Asp62 to Ile66 and Asn130 to Asp133 each bind GTP. The segment at Asn130 to Asp133 is G4. The interval Ala160–Ala162 is G5. In terms of domain architecture, KH type-2 spans Leu212–Glu290.

It belongs to the TRAFAC class TrmE-Era-EngA-EngB-Septin-like GTPase superfamily. Era GTPase family. Monomer.

Its subcellular location is the cytoplasm. It localises to the cell inner membrane. An essential GTPase that binds both GDP and GTP, with rapid nucleotide exchange. Plays a role in 16S rRNA processing and 30S ribosomal subunit biogenesis and possibly also in cell cycle regulation and energy metabolism. This chain is GTPase Era, found in Nitratidesulfovibrio vulgaris (strain DP4) (Desulfovibrio vulgaris).